A 432-amino-acid polypeptide reads, in one-letter code: 3-phosphoshikimate 1-carboxyvinyltransferase (432 aa).

Residues K22, S23, and R27 each contribute to the 3-phosphoshikimate site. K22 is a binding site for phosphoenolpyruvate. 2 residues coordinate phosphoenolpyruvate: G96 and R127. 3-phosphoshikimate is bound by residues S173, S174, Q175, S201, D316, N339, and K343. Q175 is a binding site for phosphoenolpyruvate. The active-site Proton acceptor is the D316. The phosphoenolpyruvate site is built by R347, R391, and K416.

The protein belongs to the EPSP synthase family. Monomer.

It localises to the cytoplasm. It catalyses the reaction 3-phosphoshikimate + phosphoenolpyruvate = 5-O-(1-carboxyvinyl)-3-phosphoshikimate + phosphate. Its pathway is metabolic intermediate biosynthesis; chorismate biosynthesis; chorismate from D-erythrose 4-phosphate and phosphoenolpyruvate: step 6/7. Catalyzes the transfer of the enolpyruvyl moiety of phosphoenolpyruvate (PEP) to the 5-hydroxyl of shikimate-3-phosphate (S3P) to produce enolpyruvyl shikimate-3-phosphate and inorganic phosphate. This Histophilus somni (strain 2336) (Haemophilus somnus) protein is 3-phosphoshikimate 1-carboxyvinyltransferase.